The following is a 285-amino-acid chain: Eukaryotic translation initiation factor 3 subunit F-2 (285 aa).

Positions 11–145 (VLIKPLVLFQ…TRLYCAVEIG (135 aa)) constitute an MPN domain.

It belongs to the eIF-3 subunit F family. In terms of assembly, component of the eukaryotic translation initiation factor 3 (eIF-3) complex. The eIF-3 complex interacts with pix.

It localises to the cytoplasm. Its function is as follows. Component of the eukaryotic translation initiation factor 3 (eIF-3) complex, which is involved in protein synthesis of a specialized repertoire of mRNAs and, together with other initiation factors, stimulates binding of mRNA and methionyl-tRNAi to the 40S ribosome. The eIF-3 complex specifically targets and initiates translation of a subset of mRNAs involved in cell proliferation. In Drosophila erecta (Fruit fly), this protein is Eukaryotic translation initiation factor 3 subunit F-2.